We begin with the raw amino-acid sequence, 379 residues long: Cobalt-precorrin-5B C(1)-methyltransferase (379 aa).

Belongs to the CbiD family.

The catalysed reaction is Co-precorrin-5B + S-adenosyl-L-methionine = Co-precorrin-6A + S-adenosyl-L-homocysteine. The protein operates within cofactor biosynthesis; adenosylcobalamin biosynthesis; cob(II)yrinate a,c-diamide from sirohydrochlorin (anaerobic route): step 6/10. In terms of biological role, catalyzes the methylation of C-1 in cobalt-precorrin-5B to form cobalt-precorrin-6A. The protein is Cobalt-precorrin-5B C(1)-methyltransferase of Salmonella typhimurium (strain LT2 / SGSC1412 / ATCC 700720).